We begin with the raw amino-acid sequence, 624 residues long: Kelch-like ECH-associated protein 1 (624 aa).

The residue at position 38 (cysteine 38) is an S-(2-succinyl)cysteine. Residues 77-149 enclose the BTB domain; that stretch reads CDVTLQVKYQ…AYTASISMGE (73 aa). Arginine 135 participates in a covalent cross-link: N5-[4-(S-L-cysteinyl)-5-methyl-1H-imidazol-2-yl]-L-ornithine (Arg-Cys) (interchain with C-151 in KEAP1). An S-(2-succinyl)cysteine mark is found at cysteine 151 and cysteine 241. S-(2,3-dicarboxypropyl)cysteine; alternate is present on cysteine 151. Cysteine 151 bears the S-nitrosocysteine; alternate mark. An N5-[4-(S-L-cysteinyl)-5-methyl-1H-imidazol-2-yl]-L-ornithine (Cys-Arg) (interchain with R-135 in KEAP1) cross-link involves residue cysteine 151. A BACK domain is found at 184 to 286; the sequence is AIGIANFAEQ…TPNFLQMQLQ (103 aa). S-(2,3-dicarboxypropyl)cysteine occurs at positions 257 and 273. S-(2-succinyl)cysteine is present on residues cysteine 288 and cysteine 319. Cysteine 288 is modified (S-(2,3-dicarboxypropyl)cysteine; alternate). 6 Kelch repeats span residues 327–372, 373–423, 424–470, 471–517, 518–564, and 565–611; these read LIYT…VVGG, LLYA…VIDG, HIYA…VLNR, LLYA…VLHN, CIYA…VHQG, and RIYV…VTME. Position 434 is an S-cGMP-cysteine (cysteine 434). An S-(2-succinyl)cysteine modification is found at cysteine 613.

It belongs to the KEAP1 family. Component of the BCR(KEAP1) E3 ubiquitin ligase complex, at least composed of 2 molecules of CUL3, 2 molecules of KEAP1, and RBX1. Interacts with NFE2L2/NRF2; the interaction is direct. Forms a ternary complex with NFE2L2/NRF2 and PGAM5. Interacts with (phosphorylated) SQSTM1/p62; the interaction is direct and inactivates the BCR(KEAP1) complex by sequestering it in inclusion bodies, promoting its degradation. Interacts with NFE2L1. Interacts with BPTF and PTMA. Interacts with MAP1LC3B. Interacts indirectly with ENC1. Interacts with SESN1 and SESN2. Interacts with HSP90AA1 and HSP90AB1. Interacts with PGCKA1; this interaction prevents the ubiquitination of KEAP1 by TRIM25, thus protecting KEAP1 from degradation. Post-translationally, non-enzymatic covalent modifications of reactive cysteines by electrophile metabolites inactivate the BCR(KEAP1) complex. Accumulation of fumarate promotes the formation of cysteine S-succination (S-(2-succinyl)cysteine), leading to inactivate the BCR(KEAP1) complex and promote NFE2L2/NRF2 nuclear accumulation and activation. Nitric oxide-dependent 8-Nitro-cGMP formation promotes cysteine guanylation (S-cGMP-cysteine), leading to NFE2L2/NRF2 nuclear accumulation and activation. Itaconate, an anti-inflammatory metabolite generated in response to lipopolysaccharide, alkylates cysteines, activating NFE2L2/NRF2. Methylglyoxal, a reactive metabolite that accumulates when the glycolytic enzyme PGK1 is inhibited, promotes formation of a methylimidazole cross-link between proximal Cys-151 and Arg-135 on another KEAP1 molecule, resulting in an inactive dimer that inactivates the BCR(KEAP1) complex. In terms of processing, degraded via a proteasomal-independent process during selective autophagy: interaction with phosphorylated SQSTM1/p62 sequesters KEAP1 in inclusion bodies, leading to its degradation. Auto-ubiquitinated by the BCR(KEAP1) complex. Quinone-induced oxidative stress, but not sulforaphane, increases its ubiquitination. Ubiquitination and subsequent degradation is most pronounced following prolonged exposure of cells to oxidative stress, particularly in glutathione-deficient cells that are highly susceptible to oxidative stress. Deubiquitinated by USP25; leading to stabilization. Ubiquitinated by TRIM25; leading to degradation upon ER stress.

Its subcellular location is the cytoplasm. It localises to the nucleus. Its pathway is protein modification; protein ubiquitination. Its activity is regulated as follows. Ubiquitin ligase activity of the BCR(KEAP1) complex is inhibited by oxidative stress and electrophile metabolites such as sulforaphane. Electrophile metabolites react with reactive cysteine residues in KEAP1 and trigger non-enzymatic covalent modifications of these cysteine residues, leading to inactivate the ubiquitin ligase activity of the BCR(KEAP1) complex. Selective autophagy also inactivates the BCR(KEAP1) complex via interaction between KEAP1 and SQSTM1/p62, which sequesters the complex in inclusion bodies and promotes its degradation. Substrate-specific adapter of a BCR (BTB-CUL3-RBX1) E3 ubiquitin ligase complex that regulates the response to oxidative stress by targeting NFE2L2/NRF2 for ubiquitination. KEAP1 acts as a key sensor of oxidative and electrophilic stress: in normal conditions, the BCR(KEAP1) complex mediates ubiquitination and degradation of NFE2L2/NRF2, a transcription factor regulating expression of many cytoprotective genes. In response to oxidative stress, different electrophile metabolites trigger non-enzymatic covalent modifications of highly reactive cysteine residues in KEAP1, leading to inactivate the ubiquitin ligase activity of the BCR(KEAP1) complex, promoting NFE2L2/NRF2 nuclear accumulation and expression of phase II detoxifying enzymes. In response to selective autophagy, KEAP1 is sequestered in inclusion bodies following its interaction with SQSTM1/p62, leading to inactivation of the BCR(KEAP1) complex and activation of NFE2L2/NRF2. The BCR(KEAP1) complex also mediates ubiquitination of SQSTM1/p62, increasing SQSTM1/p62 sequestering activity and degradation. The BCR(KEAP1) complex also targets BPTF and PGAM5 for ubiquitination and degradation by the proteasome. In Pongo abelii (Sumatran orangutan), this protein is Kelch-like ECH-associated protein 1.